Consider the following 215-residue polypeptide: Reticulon-like protein B14 (215 aa).

Residues 31–211 (FADIMFWKNK…NKIPKAQAKT (181 aa)) form the Reticulon domain. Helical transmembrane passes span 41-61 (KESG…EVVE), 62-82 (YPFI…FLIW), and 141-161 (LWIL…YIVF).

Its subcellular location is the endoplasmic reticulum membrane. This is Reticulon-like protein B14 (RTNLB14) from Arabidopsis thaliana (Mouse-ear cress).